Here is a 389-residue protein sequence, read N- to C-terminus: MTNMAETKDTVQLRLLSLELLKQLWAGHEAMCQSVTRAASESNLDYSSSSNNLEMPLSQETSASSVAPNSQDKRHVWDPLDSHRGDTYDVAWYGKVNSRVDSLPPATCQHQEPQEGLRPSSVPLLATEGLKRPVSLGGPKGLGPDKAQVPRSLPLRLGKLSKPKVTFSQESSVPESSWYSRPCLDYDWTAGSLDSSSPVSSESEAYFSMLQRFREDNREDCVCNSPEAVFPELQESSGVEEDHECVYCYRINRRLFPEPLDPGAPCCLCGIPRDEQGPQTLVEPVQVRVSIPLSIMDPPHQYRIHRRKSFDASDTFALPRHCLLGWDILPPKSEKTSVPKSLDLWSSVSHGAAQRRNLSATNPSYQALRSRVPPPFWSEPQVARLCPSH.

A compositionally biased stretch (low complexity) spans 44–54; the sequence is LDYSSSSNNLE. Disordered regions lie at residues 44 to 80 and 131 to 150; these read LDYS…WDPL and KRPV…AQVP. Residues 58-70 show a composition bias toward polar residues; sequence SQETSASSVAPNS. A compositionally biased stretch (basic and acidic residues) spans 71-80; the sequence is QDKRHVWDPL. Serine 309 is modified (phosphoserine).

In terms of assembly, interacts with IGFBP2.

In terms of biological role, inhibits glioma cells invasion and down-regulates adhesion- and motility-associated genes such as NFKB2 and ICAM1. Exhibits opposing effects to IGFBP2 on cell invasion. This is Migration and invasion-inhibitory protein (Miip) from Rattus norvegicus (Rat).